The sequence spans 726 residues: Cyclin-T1 (726 aa).

Serine 117 is modified (phosphoserine). The short motif at 253-270 (KRIWNWRACEAAKKTKAD) is the Nuclear localization signal, and interaction with Tat-TAR RNA element. Position 340 is a phosphoserine (serine 340). Residue lysine 342 forms a Glycyl lysine isopeptide (Lys-Gly) (interchain with G-Cter in SUMO2) linkage. The segment at 360-385 (VDHSLPQDGSNAFISQKQNSKSVPSA) is disordered. Polar residues predominate over residues 366-382 (QDGSNAFISQKQNSKSV). Positions 384–425 (SAKVSLKEYRAKHAEELAAQKRQLENMEANVKSQYAYAAQNL) form a coiled coil. Serine 388 bears the Phosphoserine mark. Lysine 390 carries the N6-acetyllysine modification. Lysine 415 participates in a covalent cross-link: Glycyl lysine isopeptide (Lys-Gly) (interchain with G-Cter in SUMO2). ADP-ribosylserine is present on residues serine 416, serine 474, and serine 475. Residues 480–550 (IKMRIKVHAA…RPGDPKHSSQ (71 aa)) are histidine-rich domain (HRD). Lysine 481 participates in a covalent cross-link: Glycyl lysine isopeptide (Lys-Gly) (interchain with G-Cter in SUMO2). Lysine 485 carries the post-translational modification N6-(ADP-ribosyl)lysine. Histidine 487 bears the ADP-ribosylhistidine mark. Residues 487 to 506 (HAAADKHNSVEDSVTKSREH) show a composition bias toward basic and acidic residues. Disordered regions lie at residues 487 to 650 (HAAA…NGHN) and 688 to 726 (SDYL…PLPK). Phosphoserine occurs at positions 495 and 499. Positions 507-530 (KEKHKTHPSNHHHHHNHHSHKHSH) are enriched in basic residues. The segment at 527 to 570 (KHSHSQLPVGTGNKRPGDPKHSSQTSNLAHKTYSLSSSFSSSSS) is required for interaction with ZMYND8. Residue histidine 530 is modified to ADP-ribosylhistidine. ADP-ribosylserine occurs at positions 531, 549, and 552. Residue histidine 556 is modified to ADP-ribosylhistidine. Low complexity predominate over residues 560–570 (SLSSSFSSSSS). The residue at position 563 (serine 563) is an ADP-ribosylserine. Phosphoserine occurs at positions 564 and 577. A compositionally biased stretch (low complexity) spans 594–609 (STKSSSLNFSFPSLPT). The segment covering 615–630 (GHSSDTSGLSFSQPSC) has biased composition (polar residues). Residue serine 637 is modified to ADP-ribosylserine. Pro residues predominate over residues 710–726 (PPPLPSEPPPPLPPLPK).

It belongs to the cyclin family. Cyclin C subfamily. Cyclin-T1 is the predominant cyclin that associates with CDK9 to form a heterodimer called P-TEFb. P-TEFb forms a complex with AFF4/AF5Q31. Component of a complex which is at least composed of HTATSF1/Tat-SF1, P-TEFb complex, RNA pol II, SUPT5H, and NCL/nucleolin. Component of the 7SK snRNP complex at least composed of P-TEFb (composed of CDK9 and CCNT1/cyclin-T1), HEXIM1, HEXIM2, BCDIN3, SART3 proteins and 7SK and U6 snRNAs. Interacts (via central region) with ZMYND8 (via N-terminus); the interaction is direct and the association appears to occur between homodimeric ZMYND8 and the activated form of the P-TEFb complex. Interacts with BRD4, targets chromatin binding. Interacts with JMJD6. Interacts with MDFIC. Interacts with HSF1. Interacts with HTATSF1. Interacts with TBX21. In terms of assembly, (Microbial infection) Interacts with the transactivation region of HIV-1, HIV-2 and SIV Tat. As to quaternary structure, (Microbial infection) Interacts with human herpes virus 1 (HHV-1) transcriptional regulator ICP22. Post-translationally, ADP-ribosylation on serine residues by PARP1 in response to DNA damage disrupts the phase separation activity of CCNT1, thereby preventing activation of CDK9. As to expression, ubiquitously expressed.

Its subcellular location is the nucleus. Its function is as follows. Regulatory subunit of the cyclin-dependent kinase pair (CDK9/cyclin-T1) complex, also called positive transcription elongation factor B (P-TEFb), which facilitates the transition from abortive to productive elongation by phosphorylating the CTD (C-terminal domain) of the large subunit of RNA polymerase II (RNA Pol II). Required to activate the protein kinase activity of CDK9: acts by mediating formation of liquid-liquid phase separation (LLPS) that enhances binding of P-TEFb to the CTD of RNA Pol II. Functionally, (Microbial infection) In case of HIV or SIV infections, binds to the transactivation domain of the viral nuclear transcriptional activator, Tat, thereby increasing Tat's affinity for the transactivating response RNA element (TAR RNA). Serves as an essential cofactor for Tat, by promoting RNA Pol II activation, allowing transcription of viral genes. The sequence is that of Cyclin-T1 (CCNT1) from Homo sapiens (Human).